A 715-amino-acid polypeptide reads, in one-letter code: 1,4-alpha-glucan branching enzyme GlgB (715 aa).

Residue Asp-399 is the Nucleophile of the active site. The active-site Proton donor is the Glu-452.

This sequence belongs to the glycosyl hydrolase 13 family. GlgB subfamily. As to quaternary structure, monomer.

The catalysed reaction is Transfers a segment of a (1-&gt;4)-alpha-D-glucan chain to a primary hydroxy group in a similar glucan chain.. It participates in glycan biosynthesis; glycogen biosynthesis. In terms of biological role, catalyzes the formation of the alpha-1,6-glucosidic linkages in glycogen by scission of a 1,4-alpha-linked oligosaccharide from growing alpha-1,4-glucan chains and the subsequent attachment of the oligosaccharide to the alpha-1,6 position. The chain is 1,4-alpha-glucan branching enzyme GlgB from Rhodopseudomonas palustris (strain BisA53).